A 332-amino-acid chain; its full sequence is Ornithine carbamoyltransferase, catabolic (332 aa).

Carbamoyl phosphate is bound by residues 60-63, Gln-87, Arg-111, and 138-141; these read STRT and HPTQ. L-ornithine is bound by residues Asn-170, Asp-230, and 234–235; that span reads SM. Residues 271-272 and Arg-316 contribute to the carbamoyl phosphate site; that span reads CL.

The protein belongs to the aspartate/ornithine carbamoyltransferase superfamily. OTCase family.

The protein resides in the cytoplasm. The enzyme catalyses carbamoyl phosphate + L-ornithine = L-citrulline + phosphate + H(+). It functions in the pathway amino-acid degradation; L-arginine degradation via ADI pathway; carbamoyl phosphate from L-arginine: step 2/2. Its function is as follows. Reversibly catalyzes the transfer of the carbamoyl group from carbamoyl phosphate (CP) to the N(epsilon) atom of ornithine (ORN) to produce L-citrulline. The polypeptide is Ornithine carbamoyltransferase, catabolic (Bacillus cereus (strain ATCC 10987 / NRS 248)).